The primary structure comprises 527 residues: MAKFRQMGSSIFFLFLIIISLCSAHKEAFSSTDLVQMECLRVPPLEFAEAAKTVVDAITKAVAIVSKFDKKAGKSRVSNAIVDCVDLLDSAAEELSWIISASQSPNGKDNSTGDVGSDLRTWISAALSNQDTCLDGFEGTNGIIKKIVAGGLSKVGTTVRNLLTMVHSPPSKPKPKPIKAQTMTKAHSGFSKFPSWVKPGDRKLLQTDNITVADAVVAADGTGNFTTISDAVLAAPDYSTKRYVIHVKRGVYVENVEIKKKKWNIMMVGDGIDATVITGNRSFIDGWTTFRSATFAVSGRGFIARDITFQNTAGPEKHQAVAIRSDTDLGVFYRCAMRGYQDTLYAHSMRQFFRECIITGTVDFIFGDATAVFQSCQIKAKQGLPNQKNSITAQGRKDPNEPTGFTIQFSNIAADTDLLLNLNTTATYLGRPWKLYSRTVFMQNYMSDAINPVGWLEWNGNFALDTLYYGEYMNSGPGASLDRRVKWPGYHVLNTSAEANNFTVSQLIQGNLWLPSTGITFIAGLVS.

A signal peptide spans 1 to 24 (MAKFRQMGSSIFFLFLIIISLCSA). A pectinesterase inhibitor 32 region spans residues 25-165 (HKEAFSSTDL…GTTVRNLLTM (141 aa)). 4 N-linked (GlcNAc...) asparagine glycosylation sites follow: asparagine 110, asparagine 209, asparagine 224, and asparagine 280. The tract at residues 214 to 511 (DAVVAADGTG…FTVSQLIQGN (298 aa)) is pectinesterase 32. Substrate-binding residues include threonine 289 and glutamine 319. The active-site Proton donor; for pectinesterase activity is aspartate 342. Cysteines 356 and 376 form a disulfide. Catalysis depends on aspartate 363, which acts as the Nucleophile; for pectinesterase activity. N-linked (GlcNAc...) asparagine glycosylation is present at asparagine 423. Arginine 431 and tryptophan 433 together coordinate substrate. N-linked (GlcNAc...) asparagine glycosylation is found at asparagine 494 and asparagine 501.

This sequence in the N-terminal section; belongs to the PMEI family. In the C-terminal section; belongs to the pectinesterase family. Expressed in siliques.

The protein resides in the secreted. Its subcellular location is the cell wall. It carries out the reaction [(1-&gt;4)-alpha-D-galacturonosyl methyl ester](n) + n H2O = [(1-&gt;4)-alpha-D-galacturonosyl](n) + n methanol + n H(+). Its pathway is glycan metabolism; pectin degradation; 2-dehydro-3-deoxy-D-gluconate from pectin: step 1/5. Its function is as follows. Acts in the modification of cell walls via demethylesterification of cell wall pectin. This is Probable pectinesterase/pectinesterase inhibitor 32 (PME32) from Arabidopsis thaliana (Mouse-ear cress).